The chain runs to 606 residues: Ubiquitin-like modifier-activating enzyme ATG7 (606 aa).

The GXGXXG motif signature appears at 316-321; it reads GSGTLG. The active-site Glycyl thioester intermediate is the cysteine 488. Residues 567–606 form a homodimerization region; sequence ALDDYKCVEKLSGLSKVQEEAELALEEDFDFSEDDEFVTG.

It belongs to the ATG7 family. In terms of assembly, homodimer. Interacts with ATG8 through a thioester bond between Cys-488 and the C-terminal Gly of ATG8 and with ATG12 through a thioester bond between Cys-488 and the C-terminal Gly of ATG12. Also interacts with ATG3.

It localises to the cytoplasm. The protein resides in the preautophagosomal structure. Its function is as follows. E1-like activating enzyme involved in the 2 ubiquitin-like systems required for cytoplasm to vacuole transport (Cvt) and autophagy. Activates ATG12 for its conjugation with ATG5 and ATG8 for its conjugation with phosphatidylethanolamine. Both systems are needed for the ATG8 association to Cvt vesicles and autophagosomes membranes. Autophagy is essential for maintenance of amino acid levels and protein synthesis under nitrogen starvation. Required for selective autophagic degradation of the nucleus (nucleophagy) as well as for mitophagy which contributes to regulate mitochondrial quantity and quality by eliminating the mitochondria to a basal level to fulfill cellular energy requirements and preventing excess ROS production. The sequence is that of Ubiquitin-like modifier-activating enzyme ATG7 from Kluyveromyces marxianus (strain DMKU3-1042 / BCC 29191 / NBRC 104275) (Yeast).